We begin with the raw amino-acid sequence, 207 residues long: Glycerol-3-phosphate acyltransferase (207 aa).

6 helical membrane-spanning segments follow: residues 7 to 27 (YALA…LVIV), 58 to 78 (LATF…FTLL), 83 to 103 (VGFV…WLGF), 116 to 136 (LAFV…LGLF), 141 to 161 (ISSL…WLMG), and 166 to 186 (LILA…RENI).

The protein belongs to the PlsY family. In terms of assembly, probably interacts with PlsX.

It is found in the cell inner membrane. It carries out the reaction an acyl phosphate + sn-glycerol 3-phosphate = a 1-acyl-sn-glycero-3-phosphate + phosphate. Its pathway is lipid metabolism; phospholipid metabolism. In terms of biological role, catalyzes the transfer of an acyl group from acyl-phosphate (acyl-PO(4)) to glycerol-3-phosphate (G3P) to form lysophosphatidic acid (LPA). This enzyme utilizes acyl-phosphate as fatty acyl donor, but not acyl-CoA or acyl-ACP. The chain is Glycerol-3-phosphate acyltransferase from Hyphomonas neptunium (strain ATCC 15444).